Consider the following 749-residue polypeptide: Cytosolic phospholipase A2 (749 aa).

One can recognise a C2 domain in the interval 1–124 (MASIDPYQHI…GEKKQVPFTF (124 aa)). Positions 1–178 (MASIDPYQHI…LRKLLGPEKT (178 aa)) are phospholipid binding. Residues aspartate 40, threonine 41, aspartate 43, asparagine 65, aspartate 93, alanine 94, and asparagine 95 each contribute to the Ca(2+) site. One can recognise a PLA2c domain in the interval 138–740 (VCSSTDLRFS…NDVEARKLLH (603 aa)). The active-site Nucleophile is the serine 229. Positions 417–458 (MEEEIENLKPKHILGNDSSDSDDEMQEPKGTENSKAEEEYQR) are disordered. Positions 442-457 (QEPKGTENSKAEEEYQ) are enriched in basic and acidic residues. Aspartate 549 serves as the catalytic Proton acceptor.

The protein resides in the cytoplasm. The protein localises to the cytoplasmic vesicle. It carries out the reaction a 1,2-diacyl-sn-glycero-3-phosphocholine + H2O = a 1-acyl-sn-glycero-3-phosphocholine + a fatty acid + H(+). The enzyme catalyses a 1-acyl-sn-glycero-3-phosphocholine + H2O = sn-glycerol 3-phosphocholine + a fatty acid + H(+). Its activity is regulated as follows. Stimulated by agonists such as ATP, EGF, thrombin and bradykinin as well as by cytosolic Ca(2+). Its function is as follows. Selectively hydrolyzes arachidonyl phospholipids in the sn-2 position releasing arachidonic acid. Together with its lysophospholipid activity, it is implicated in the initiation of the inflammatory response. The chain is Cytosolic phospholipase A2 (pla2g4a) from Xenopus tropicalis (Western clawed frog).